The chain runs to 94 residues: Phosphoribosyl-ATP pyrophosphatase (94 aa).

It belongs to the PRA-PH family.

The protein resides in the cytoplasm. It carries out the reaction 1-(5-phospho-beta-D-ribosyl)-ATP + H2O = 1-(5-phospho-beta-D-ribosyl)-5'-AMP + diphosphate + H(+). It functions in the pathway amino-acid biosynthesis; L-histidine biosynthesis; L-histidine from 5-phospho-alpha-D-ribose 1-diphosphate: step 2/9. In Pyrobaculum arsenaticum (strain DSM 13514 / JCM 11321 / PZ6), this protein is Phosphoribosyl-ATP pyrophosphatase.